The sequence spans 388 residues: Protein RMD5 homolog (388 aa).

Residues 112–144 (DTHIVNQIIANFFYRQGMFDIGDCFVAETGESE) form the LisH domain. The CTLH domain occupies 150–207 (SFVEMYRILEAMKRRDLEPALNWAVSNSDKLKEARSDLEMKLHSLHFLEIARGKNSKE). Residues 330–374 (CPVSKEQSSDDNPPMMMSCGHVLCKQTINKMSKNGSKSSFKCPYC) form an RING-Gid-type zinc finger.

Interacts with RANBPM.

Its subcellular location is the cytoplasm. The protein is Protein RMD5 homolog of Arabidopsis thaliana (Mouse-ear cress).